Consider the following 248-residue polypeptide: tRNA (guanine-N(1)-)-methyltransferase (248 aa).

S-adenosyl-L-methionine is bound by residues G113 and 133–138 (VGDYVL).

The protein belongs to the RNA methyltransferase TrmD family. As to quaternary structure, homodimer.

It is found in the cytoplasm. It carries out the reaction guanosine(37) in tRNA + S-adenosyl-L-methionine = N(1)-methylguanosine(37) in tRNA + S-adenosyl-L-homocysteine + H(+). In terms of biological role, specifically methylates guanosine-37 in various tRNAs. In Shewanella sp. (strain ANA-3), this protein is tRNA (guanine-N(1)-)-methyltransferase.